Reading from the N-terminus, the 300-residue chain is MRVSELPVGRFPPLAVVPSSSRVLDVLVAMGRNRVRHVPLVDERGVLKGMVSARDLVDFLGGRRFRDVVEARFNGDVYKALEQTGVEFLKYDPPYVYTRSDLREVIELMVERGIGALAVVDEDLRVVGIVSERHVISLLANVETHVKVKEIMTSEVVYLSPMDSLFEGMRVMSERRIRRLPLVSGEELRGIVTIKDVLSYVSREDVLARLKEGSRSAVYDTPLVYISSKPVLAVEDDVDVGLAVSLMKKHGIGALVVTHDGKPRGIVTERDVLTRLPRVKGVEIFLDEATKTIFGGRVTF.

4 CBS domains span residues 10-68 (RFPP…FRDV), 88-148 (FLKY…HVKV), 152-207 (MTSE…EDVL), and 226-284 (ISSK…GVEI).

This is an uncharacterized protein from Thermofilum pendens.